We begin with the raw amino-acid sequence, 226 residues long: UPF0319 protein YPO1442/y2728/YP_1333 (226 aa).

A signal peptide spans 1 to 20 (MKLGLVAGMLAVCFSFSSVA).

The protein belongs to the UPF0319 family.

The chain is UPF0319 protein YPO1442/y2728/YP_1333 from Yersinia pestis.